A 1450-amino-acid polypeptide reads, in one-letter code: M-protein, striated muscle (1450 aa).

Residues 66–87 (AHEAMQESRKRTHEQKSHASDE) form a disordered region. Ig-like C2-type domains follow at residues 142–233 (PEIL…CAVV) and 254–359 (PLSY…AFLF). 5 Fibronectin type-III domains span residues 373–468 (APMD…ALDP), 501–596 (PPTN…PQDI), 602–695 (APGR…VQAA), 698–800 (CPSY…TMPE), and 803–900 (PAYD…ASPG). 5 consecutive Ig-like C2-type domains span residues 899–995 (PGTK…LMTL), 1002–1115 (PTIP…FLRK), 1118–1204 (PHFS…LELS), 1225–1322 (PLKI…QRLK), and 1333–1422 (KVIG…VTVS).

Expressed in pectoralis and cardiac muscle.

In terms of biological role, is a structural constituent of myofibrillar M-band in striated muscle. This is M-protein, striated muscle from Gallus gallus (Chicken).